We begin with the raw amino-acid sequence, 165 residues long: 3-hydroxyacyl-[acyl-carrier-protein] dehydratase FabZ (165 aa).

The active site involves His68.

It belongs to the thioester dehydratase family. FabZ subfamily.

Its subcellular location is the cytoplasm. The enzyme catalyses a (3R)-hydroxyacyl-[ACP] = a (2E)-enoyl-[ACP] + H2O. Functionally, involved in unsaturated fatty acids biosynthesis. Catalyzes the dehydration of short chain beta-hydroxyacyl-ACPs and long chain saturated and unsaturated beta-hydroxyacyl-ACPs. The protein is 3-hydroxyacyl-[acyl-carrier-protein] dehydratase FabZ of Methylobacterium sp. (strain 4-46).